We begin with the raw amino-acid sequence, 572 residues long: MRTSQYMLSTLKETPADAEVISHQLMLRAGMIRKLASGLYTWLPTGLRVLRKVENIVREEMNNAGAIEVSMPVVQPADLWVESGRWDQYGPELLRFVDRGERPFVLGPTHEEVITDLIRNEVSSYKQLPLNFFQIQTKFRDEVRPRFGVMRSREFLMKDAYSFHTSQESLQATYDTMYAAYSKIFSRMDLDFRAVQADTGSIGGNASHEFQVLASSGEDDIVFSTESDYAANIELAEAVAPKLGRAEAKEELRLIDTPNAKTIAELVEQFKLPVEKTVKTLLVKATEESGHQLVALLVRGDHELNEIKAEKIAQVASPLTFATEEEIRAIIGAGPGSLGPVKLDIPVVVDRTVAAMSDFSAGANIDGKHYFGINWVRDVALPQVADIRNVVEGDISPDGKGTLQIKRGIEVGHIFQLGSKYSEALKATVQGEDGRNQTLTMGCYGIGVTRVVAAAIEQNNDERGIIWPDAIAPFHVAILPMNMHKSFRVKEVAEDIYQQLRAKGIEVLLDDRKERPGVMFADMELIGVPHTIVIGDRNLDSEEIEYKNRRVGEKQMIKTSEIIDFLLANIIR.

Belongs to the class-II aminoacyl-tRNA synthetase family. ProS type 1 subfamily. Homodimer.

It localises to the cytoplasm. The enzyme catalyses tRNA(Pro) + L-proline + ATP = L-prolyl-tRNA(Pro) + AMP + diphosphate. Its function is as follows. Catalyzes the attachment of proline to tRNA(Pro) in a two-step reaction: proline is first activated by ATP to form Pro-AMP and then transferred to the acceptor end of tRNA(Pro). As ProRS can inadvertently accommodate and process non-cognate amino acids such as alanine and cysteine, to avoid such errors it has two additional distinct editing activities against alanine. One activity is designated as 'pretransfer' editing and involves the tRNA(Pro)-independent hydrolysis of activated Ala-AMP. The other activity is designated 'posttransfer' editing and involves deacylation of mischarged Ala-tRNA(Pro). The misacylated Cys-tRNA(Pro) is not edited by ProRS. In Pectobacterium atrosepticum (strain SCRI 1043 / ATCC BAA-672) (Erwinia carotovora subsp. atroseptica), this protein is Proline--tRNA ligase.